Consider the following 249-residue polypeptide: 5'-nucleotidase SurE (249 aa).

4 residues coordinate a divalent metal cation: aspartate 8, aspartate 9, serine 39, and asparagine 91.

Belongs to the SurE nucleotidase family. Requires a divalent metal cation as cofactor.

The protein resides in the cytoplasm. The enzyme catalyses a ribonucleoside 5'-phosphate + H2O = a ribonucleoside + phosphate. Functionally, nucleotidase that shows phosphatase activity on nucleoside 5'-monophosphates. In Pseudomonas paraeruginosa (strain DSM 24068 / PA7) (Pseudomonas aeruginosa (strain PA7)), this protein is 5'-nucleotidase SurE.